The chain runs to 459 residues: tRNA-guanine(15) transglycosylase (459 aa).

The active-site Nucleophile is the D90. Substrate is bound by residues D125 and G192. Zn(2+) is bound by residues C275, C277, and C280.

Belongs to the archaeosine tRNA-ribosyltransferase family. Zn(2+) is required as a cofactor.

The enzyme catalyses guanosine(15) in tRNA + 7-cyano-7-deazaguanine = 7-cyano-7-carbaguanosine(15) in tRNA + guanine. It participates in tRNA modification; archaeosine-tRNA biosynthesis. Its function is as follows. Exchanges the guanine residue with 7-cyano-7-deazaguanine (preQ0) at position 15 in the dihydrouridine loop (D-loop) of archaeal tRNAs. The sequence is that of tRNA-guanine(15) transglycosylase from Methanopyrus kandleri (strain AV19 / DSM 6324 / JCM 9639 / NBRC 100938).